Here is a 430-residue protein sequence, read N- to C-terminus: Serine--tRNA ligase (430 aa).

Position 234–236 (234–236 (TAE)) interacts with L-serine. 265 to 267 (RRE) serves as a coordination point for ATP. Glu288 provides a ligand contact to L-serine. 352–355 (EISS) is an ATP binding site. Ser388 is a binding site for L-serine.

This sequence belongs to the class-II aminoacyl-tRNA synthetase family. Type-1 seryl-tRNA synthetase subfamily. In terms of assembly, homodimer. The tRNA molecule binds across the dimer.

The protein localises to the cytoplasm. The enzyme catalyses tRNA(Ser) + L-serine + ATP = L-seryl-tRNA(Ser) + AMP + diphosphate + H(+). The catalysed reaction is tRNA(Sec) + L-serine + ATP = L-seryl-tRNA(Sec) + AMP + diphosphate + H(+). The protein operates within aminoacyl-tRNA biosynthesis; selenocysteinyl-tRNA(Sec) biosynthesis; L-seryl-tRNA(Sec) from L-serine and tRNA(Sec): step 1/1. Its function is as follows. Catalyzes the attachment of serine to tRNA(Ser). Is also able to aminoacylate tRNA(Sec) with serine, to form the misacylated tRNA L-seryl-tRNA(Sec), which will be further converted into selenocysteinyl-tRNA(Sec). This is Serine--tRNA ligase from Thermosynechococcus vestitus (strain NIES-2133 / IAM M-273 / BP-1).